Consider the following 418-residue polypeptide: Serine hydroxymethyltransferase (418 aa).

Residues Leu-121 and 125–127 each bind (6S)-5,6,7,8-tetrahydrofolate; that span reads GHL. The residue at position 230 (Lys-230) is an N6-(pyridoxal phosphate)lysine. (6S)-5,6,7,8-tetrahydrofolate-binding positions include Glu-246 and 355–357; that span reads SPF.

This sequence belongs to the SHMT family. Homodimer. The cofactor is pyridoxal 5'-phosphate.

It is found in the cytoplasm. It catalyses the reaction (6R)-5,10-methylene-5,6,7,8-tetrahydrofolate + glycine + H2O = (6S)-5,6,7,8-tetrahydrofolate + L-serine. It participates in one-carbon metabolism; tetrahydrofolate interconversion. The protein operates within amino-acid biosynthesis; glycine biosynthesis; glycine from L-serine: step 1/1. Its function is as follows. Catalyzes the reversible interconversion of serine and glycine with tetrahydrofolate (THF) serving as the one-carbon carrier. This reaction serves as the major source of one-carbon groups required for the biosynthesis of purines, thymidylate, methionine, and other important biomolecules. Also exhibits THF-independent aldolase activity toward beta-hydroxyamino acids, producing glycine and aldehydes, via a retro-aldol mechanism. This Streptococcus pneumoniae (strain 70585) protein is Serine hydroxymethyltransferase.